A 598-amino-acid polypeptide reads, in one-letter code: MSVDKEFLASLPTLPGVYRMVDAAGAVLYVGKAKDLRKRVGSYFLKTDQSPRIRLMLKSVDHIDTTVTRTEAEALLLENNLIKGLKPRFNILFRDDKSYPYLLLTGHGYPRLAYFRGAPKKRDQAFGPYPNSYAVRESIQLLQKVFQLRTCEDTVFGNRSRPCLLHQIKRCSAPCVSLVSAETYARDVAEAMLLLKGEATALTEEITAQMNAAAENLDFETAAYLRDRLRMLATVREKQFVDTTGSEADADVVAVAEVGGVIAVNLTMIRGGRHLGDRSFFPQHGEGAALGEALEAFVAQHYLDHPIPARILVSEAIDSAALQTLLSEQAGKKVTLQHRVTGERRVWIAMAQANARLSAERRSADRANQSQRLAALRDTLELPTLNRIECFDISHTMGEATIASCVVYEGDDLKKSDYRRYNIEGITPGDDYAAMHAALIKRFHRTVEENGVLPDLLLIDGGKGQVAMAVEALAELGIDDVLLLGVAKGESRKPGLETLIFADGRELKLARDHPGFHLIQQVRDEAHRFAITGHRAKRGKARVQSTLEDIAGIGPKRRKQLLEHFGGLQGVRNAGVDALASVNGISRELAEIIYNALH.

A GIY-YIG domain is found at threonine 13 to isoleucine 91. The region spanning threonine 200–valine 235 is the UVR domain.

It belongs to the UvrC family. Interacts with UvrB in an incision complex.

The protein localises to the cytoplasm. Its function is as follows. The UvrABC repair system catalyzes the recognition and processing of DNA lesions. UvrC both incises the 5' and 3' sides of the lesion. The N-terminal half is responsible for the 3' incision and the C-terminal half is responsible for the 5' incision. The sequence is that of UvrABC system protein C from Thiobacillus denitrificans (strain ATCC 25259 / T1).